Reading from the N-terminus, the 344-residue chain is Protein pelota homolog (344 aa).

The protein belongs to the eukaryotic release factor 1 family. Pelota subfamily. In terms of assembly, monomer. The cofactor is a divalent metal cation.

Its subcellular location is the cytoplasm. Its function is as follows. May function in recognizing stalled ribosomes, interact with stem-loop structures in stalled mRNA molecules, and effect endonucleolytic cleavage of the mRNA. May play a role in the release non-functional ribosomes and degradation of damaged mRNAs. Has endoribonuclease activity. The chain is Protein pelota homolog from Saccharolobus islandicus (strain Y.N.15.51 / Yellowstone #2) (Sulfolobus islandicus).